The primary structure comprises 211 residues: Hypoxanthine-guanine phosphoribosyltransferase (211 aa).

The interval 1–20 (MSNSAKSPSGPVGDEGRRNY) is disordered. GMP is bound by residues Lys66, 125 to 133 (EDIVDSAIT), Lys157, and Asp185. Asp129 serves as the catalytic Proton acceptor. Position 185 (Asp185) interacts with Mg(2+).

It belongs to the purine/pyrimidine phosphoribosyltransferase family. It depends on Mg(2+) as a cofactor.

Its subcellular location is the cytoplasm. The enzyme catalyses IMP + diphosphate = hypoxanthine + 5-phospho-alpha-D-ribose 1-diphosphate. The catalysed reaction is GMP + diphosphate = guanine + 5-phospho-alpha-D-ribose 1-diphosphate. It participates in purine metabolism; IMP biosynthesis via salvage pathway; IMP from hypoxanthine: step 1/1. Converts guanine to guanosine monophosphate, and hypoxanthine to inosine monophosphate. Transfers the 5-phosphoribosyl group from 5-phosphoribosylpyrophosphate onto the purine. Plays a central role in the generation of purine nucleotides through the purine salvage pathway. The polypeptide is Hypoxanthine-guanine phosphoribosyltransferase (Leishmania donovani).